Consider the following 587-residue polypeptide: Capsid vertex component 2 (587 aa).

Positions 1–53 are interaction with major capsid protein/MCP; that stretch reads MAEYVNYVLGSLYVSDTATSTIPTDVRNFIAPPFPLNFWSGPTFTVRSNTRAD. The disordered stretch occupies residues 113–132; sequence SADAATPQVNASEADQRPDN.

This sequence belongs to the herpesviridae CVC2 protein family. In terms of assembly, heterodimerizes with CVC1. Interacts with major capsid protein/MCP and triplex capsid protein 1/TRX1 at the pentamer vertices. Interacts with the large tegument protein/LTP.

The protein resides in the virion. Its subcellular location is the host nucleus. Functionally, capsid vertex-specific component that plays a role during viral DNA encapsidation, assuring correct genome cleavage and presumably stabilizing capsids that contain full-length viral genomes. Participates in the interaction between the capsid and the tegument through interaction with the large tegument protein/LTP. This is Capsid vertex component 2 from Equine herpesvirus 1 (strain V592) (EHV-1).